We begin with the raw amino-acid sequence, 412 residues long: Putative competence-damage inducible protein (412 aa).

This sequence belongs to the CinA family.

This is Putative competence-damage inducible protein from Bacillus cereus (strain AH187).